The sequence spans 374 residues: Translocating chain-associated membrane protein 1 (374 aa).

The Cytoplasmic portion of the chain corresponds to 1–29 (MAIRKKSNKNPPLLSHEFLLQNHADIVSC). A helical transmembrane segment spans residues 30–50 (LAMLFLLGLMFEVTAKGAIIF). At 51–76 (VALQYNVTRPATEEQATESASLYHYG) the chain is on the lumenal side. The N-linked (GlcNAc...) asparagine glycan is linked to Asn56. Residues 77–97 (IKDLATVLFYMLVAIIIHAII) traverse the membrane as a helical segment. The Cytoplasmic portion of the chain corresponds to 98–121 (QEYVLDKINRRMHFSKTKHSKFNE). Positions 117 to 326 (SKFNESGQLS…NFQLRRWREH (210 aa)) constitute a TLC domain. The chain crosses the membrane as a helical span at residues 122-142 (SGQLSAFYLFACVWGTFILIS). The Lumenal portion of the chain corresponds to 143–159 (ENYISDPTILWRAYPHN). The chain crosses the membrane as a helical span at residues 160–180 (LMTFQTKFFYISQLAYWLHAF). The Cytoplasmic segment spans residues 181–192 (PELYFQKTKKED). Residues 193-213 (IPRQLVYIGLYLFHIAGAYLL) form a helical membrane-spanning segment. The Lumenal segment spans residues 214–217 (NLNH). The chain crosses the membrane as a helical span at residues 218–238 (LGLVLLVLHYFVEFLFHISRL). Over 239 to 251 (FYFSDEKYQKGFS) the chain is Cytoplasmic. The chain crosses the membrane as a helical span at residues 252 to 272 (LWAVLFVLGRLLTLILSVLTV). Topologically, residues 273 to 297 (GFGLARAENQKLDFSTGNFNVLAVR) are lumenal. A helical membrane pass occupies residues 298-318 (IAVLASICITQAFMMWKFINF). Residues 319 to 374 (QLRRWREHSAFQAPPVKRKPAVTKGRSSRKGTENGVNGTVTSNGADSPRNRKEKSS) are Cytoplasmic-facing. Residues 333–374 (PVKRKPAVTKGRSSRKGTENGVNGTVTSNGADSPRNRKEKSS) are disordered. Residues 334 to 347 (VKRKPAVTKGRSSR) are compositionally biased toward basic residues. Over residues 352–363 (NGVNGTVTSNGA) the composition is skewed to polar residues. Position 365 is a phosphoserine (Ser365).

The protein belongs to the TRAM family. As to quaternary structure, interacts with SEC61B. May interact with Derlin-1/DERL1. Post-translationally, N-glycosylated.

The protein resides in the endoplasmic reticulum membrane. Involved in the translocation of nascent protein chains into or through the endoplasmic reticulum (ER) membrane by facilitating the proper chain positioning at the SEC61 channel. Regulates the exposure of nascent secretory protein chain to the cytosol during translocation into the ER. May affect the phospholipid bilayer in the vicinity of the lateral gate of the SEC61 channel, thereby facilitating ER protein transport. Intimately associates with transmembrane (TM) domain of nascent membrane proteins during the entire integration process into the ER membrane. Associates with the second TM domain of G-protein-coupled receptor opsin/OPSD nascent chain in the ER membrane, which may facilitate its integration into the membrane. Under conditions of ER stress, participates in the disposal of misfolded ER membrane proteins during the unfolded protein response (UPR), an integrated stress response (ISR) pathway, by selectively retrotranslocating misfolded ER-membrane proteins from the ER into the cytosol where they are ubiquitinated and degraded by the proteasome. The polypeptide is Translocating chain-associated membrane protein 1 (Mus musculus (Mouse)).